The chain runs to 243 residues: 7-carboxy-7-deazaguanine synthase (243 aa).

Residues 9-11 (IMG) and Arg-24 contribute to the substrate site. Residues 15 to 243 (YIGRRFIFVR…IQMHKYLGML (229 aa)) form the Radical SAM core domain. [4Fe-4S] cluster is bound by residues Cys-28, Cys-32, and Cys-35. Residue Thr-84 participates in substrate binding. Gly-86 is a binding site for S-adenosyl-L-methionine.

The protein belongs to the radical SAM superfamily. 7-carboxy-7-deazaguanine synthase family. Homodimer. [4Fe-4S] cluster is required as a cofactor. Requires S-adenosyl-L-methionine as cofactor. It depends on Mg(2+) as a cofactor.

The catalysed reaction is 6-carboxy-5,6,7,8-tetrahydropterin + H(+) = 7-carboxy-7-deazaguanine + NH4(+). It participates in purine metabolism; 7-cyano-7-deazaguanine biosynthesis. In terms of biological role, catalyzes the complex heterocyclic radical-mediated conversion of 6-carboxy-5,6,7,8-tetrahydropterin (CPH4) to 7-carboxy-7-deazaguanine (CDG), a step common to the biosynthetic pathways of all 7-deazapurine-containing compounds. The sequence is that of 7-carboxy-7-deazaguanine synthase from Methanocaldococcus jannaschii (strain ATCC 43067 / DSM 2661 / JAL-1 / JCM 10045 / NBRC 100440) (Methanococcus jannaschii).